The primary structure comprises 498 residues: Protein flp (498 aa).

The next 4 membrane-spanning stretches (helical) occupy residues 6–26 (LYFLSISIIILVAISIAIYIT), 389–409 (FNIVTVLMTTLILLAFIFSAY), 433–453 (LTLCLCIAIALILYALPYLIL), and 471–491 (LALITTLIALFSTLIVILLFL).

Its subcellular location is the cell membrane. Its function is as follows. Its precise function is unknown. Has no penicillin-binding activity and is not involved in methicillin resistance. In Staphylococcus aureus (strain Mu50 / ATCC 700699), this protein is Protein flp (flp).